The primary structure comprises 96 residues: Acylphosphatase (96 aa).

Residues 4–91 (RVHVYVKGKV…GEFDDFRILY (88 aa)) enclose the Acylphosphatase-like domain. Active-site residues include arginine 19 and asparagine 37.

The protein belongs to the acylphosphatase family.

It carries out the reaction an acyl phosphate + H2O = a carboxylate + phosphate + H(+). This Syntrophus aciditrophicus (strain SB) protein is Acylphosphatase (acyP).